A 319-amino-acid chain; its full sequence is Thioredoxin reductase (319 aa).

36–43 is a binding site for FAD; that stretch reads TGINKGGQ. A disulfide bond links Cys-136 and Cys-139. 288–297 serves as a coordination point for FAD; it reads DVIDHVYRQA.

The protein belongs to the class-II pyridine nucleotide-disulfide oxidoreductase family. In terms of assembly, homodimer. It depends on FAD as a cofactor.

It is found in the cytoplasm. The catalysed reaction is [thioredoxin]-dithiol + NADP(+) = [thioredoxin]-disulfide + NADPH + H(+). The chain is Thioredoxin reductase (trxB) from Buchnera aphidicola subsp. Schizaphis graminum (strain Sg).